We begin with the raw amino-acid sequence, 47 residues long: Delta-actitoxin-Ael1a (47 aa).

Intrachain disulfides connect Cys-4–Cys-44, Cys-6–Cys-34, and Cys-27–Cys-45.

This sequence belongs to the sea anemone sodium channel inhibitory toxin family. Type I subfamily. Expressed in ectodermal glands. Not expressed in nematocytes.

It is found in the secreted. Functionally, binds specifically to voltage-gated sodium channels (Nav), thereby delaying their inactivation during signal transduction. It strongly stimulates mammalian cardiac muscle contraction. Paralyzes the shore crab (C.maenas) by tetanic contractions after intramuscular injection. The sequence is that of Delta-actitoxin-Ael1a from Anthopleura elegantissima (Green aggregating anemone).